The primary structure comprises 1704 residues: Phospholipid-transporting ATPase ABCA3 (1704 aa).

N-linked (GlcNAc...) asparagine glycosylation is present at Asn-14. The helical transmembrane segment at 22–42 threads the bilayer; sequence VLVTVLELFLPLLFSGILIWL. Asn-53, Asn-124, Asn-140, and Asn-228 each carry an N-linked (GlcNAc...) asparagine glycan. 6 consecutive transmembrane segments (helical) span residues 261–283, 307–327, 344–364, 373–393, 405–425, and 447–467; these read YQLPLLLMLSFTYTSLTIIRAVV, AWFLMFFLFFLIVVSFMTLLF, SLVLAFLLCFAISSISFSFMV, IAAAVGGFLYFFTYTPYFFVA, LLSCLLSNVAMAMGAQLIGKF, and FCFGQVLGMLLLDSALYGLVT. One can recognise an ABC transporter 1 domain in the interval 530 to 763; it reads IKIKHLSKVF…YGAGYHMTLV (234 aa). Residue 566 to 573 coordinates ATP; the sequence is GHNGAGKT. A glycan (N-linked (GlcNAc...) asparagine) is linked at Asn-620. 7 helical membrane passes run 925–945, 1100–1120, 1144–1164, 1183–1203, 1213–1233, 1245–1265, and 1310–1330; these read MVAAQVLVPLTCLTLALLAIH, IALNLLIAMAFLASTFSILAV, SALLWDLISFLVPSLLLLVVF, LLLMLYGWAIIPLMYLMSFFF, LTIFNILSGIATFIMVTIMRI, LDHVFLVLPNHCLGMAVSNFY, and MAASGGIYLTLLFLIETNLLW. N-linked (GlcNAc...) asparagine glycosylation is present at Asn-1350. One can recognise an ABC transporter 2 domain in the interval 1381–1614; sequence LIINELSKVY…FGSGYSLQAK (234 aa). ATP is bound at residue 1416 to 1423; the sequence is GFNGAGKT.

This sequence belongs to the ABC transporter superfamily. ABCA family. As to quaternary structure, homooligomer; disulfide-linked. N-glycosylated. Localization at intracellular vesicles is accompanied by processing of oligosaccharide from high mannose type to complex type. N-linked glycosylation at Asn-124 and Asn-140 is required for stability and efficient anterograde trafficking and prevents from proteasomal degradation. Post-translationally, proteolytically cleaved by CTSL and to a lower extent by CTSB within multivesicular bodies (MVB) and lamellar bodies (LB) leading to a mature form of 150 kDa. In terms of tissue distribution, highly expressed in the lung and moderately expressed in the kidney, adipose, macrophage, and spleen.

The protein resides in the endosome. Its subcellular location is the multivesicular body membrane. It localises to the cytoplasmic vesicle membrane. It is found in the late endosome membrane. The protein localises to the lysosome membrane. The enzyme catalyses a 1,2-diacyl-sn-glycero-3-phospho-(1'-sn-glycerol)(in) + ATP + H2O = a 1,2-diacyl-sn-glycero-3-phospho-(1'-sn-glycerol)(out) + ADP + phosphate + H(+). The catalysed reaction is a 1,2-diacyl-sn-glycero-3-phosphocholine(in) + ATP + H2O = a 1,2-diacyl-sn-glycero-3-phosphocholine(out) + ADP + phosphate + H(+). It carries out the reaction ATP + H2O + phospholipidSide 1 = ADP + phosphate + phospholipidSide 2.. It catalyses the reaction ATP + H2O + xenobioticSide 1 = ADP + phosphate + xenobioticSide 2.. The enzyme catalyses 1,2-dihexadecanoyl-sn-glycero-3-phosphocholine(in) + ATP + H2O = 1,2-dihexadecanoyl-sn-glycero-3-phosphocholine(out) + ADP + phosphate + H(+). The catalysed reaction is cholesterol(in) + ATP + H2O = cholesterol(out) + ADP + phosphate + H(+). Its function is as follows. Catalyzes the ATP-dependent transport of phospholipids such as phosphatidylcholine and phosphoglycerol from the cytoplasm into the lumen side of lamellar bodies, in turn participates in the lamellar bodies biogenesis and homeostasis of pulmonary surfactant. Transports preferentially phosphatidylcholine containing short acyl chains. In addition plays a role as an efflux transporter of miltefosine across macrophage membranes and free cholesterol (FC) through intralumenal vesicles by removing FC from the cell as a component of surfactant and protects cells from free cholesterol toxicity. This Mus musculus (Mouse) protein is Phospholipid-transporting ATPase ABCA3 (Abca3).